Reading from the N-terminus, the 299-residue chain is MKKIGTELLKRGFAKMVKHGVVMDVTNPEQARIAEDAGAAAVMALERVPADIRAEGGVSRMSDPEMILEIKDEVSIPVMAKARIGHFVEAQALESLGIDMVDESEVLTPADEIHHIDKNAFDIPFVCGARNLGEALRRIDEGAAMIRTKGEAGTGDVIEAVKHMRAVNEGIAKVVGYYEMGCDRELVQMARNELKVPMDLVYEVAELKRLPVVNFAAGGIATPADAALMMQLGCDGVFVGSGIFKSGNPEERARAIVEATYNYDKPDVIAEVSKNLGEAMVGINVDAIPEKELLAKRGI.

Aspartate 24 contributes to the D-ribose 5-phosphate binding site. The active-site Schiff-base intermediate with D-ribose 5-phosphate is lysine 81. Glycine 153 is a D-ribose 5-phosphate binding site. Arginine 165 serves as a coordination point for D-glyceraldehyde 3-phosphate. Residues glycine 219 and 240-241 (GS) each bind D-ribose 5-phosphate.

This sequence belongs to the PdxS/SNZ family. In terms of assembly, in the presence of PdxT, forms a dodecamer of heterodimers.

It carries out the reaction aldehydo-D-ribose 5-phosphate + D-glyceraldehyde 3-phosphate + L-glutamine = pyridoxal 5'-phosphate + L-glutamate + phosphate + 3 H2O + H(+). It functions in the pathway cofactor biosynthesis; pyridoxal 5'-phosphate biosynthesis. In terms of biological role, catalyzes the formation of pyridoxal 5'-phosphate from ribose 5-phosphate (RBP), glyceraldehyde 3-phosphate (G3P) and ammonia. The ammonia is provided by the PdxT subunit. Can also use ribulose 5-phosphate and dihydroxyacetone phosphate as substrates, resulting from enzyme-catalyzed isomerization of RBP and G3P, respectively. In Methanococcus aeolicus (strain ATCC BAA-1280 / DSM 17508 / OCM 812 / Nankai-3), this protein is Pyridoxal 5'-phosphate synthase subunit PdxS.